Reading from the N-terminus, the 121-residue chain is Large ribosomal subunit protein uL22 (121 aa).

This sequence belongs to the universal ribosomal protein uL22 family. As to quaternary structure, part of the 50S ribosomal subunit.

This protein binds specifically to 23S rRNA; its binding is stimulated by other ribosomal proteins, e.g. L4, L17, and L20. It is important during the early stages of 50S assembly. It makes multiple contacts with different domains of the 23S rRNA in the assembled 50S subunit and ribosome. Functionally, the globular domain of the protein is located near the polypeptide exit tunnel on the outside of the subunit, while an extended beta-hairpin is found that lines the wall of the exit tunnel in the center of the 70S ribosome. The polypeptide is Large ribosomal subunit protein uL22 (Synechococcus sp. (strain WH7803)).